The primary structure comprises 219 residues: RNA-3 uncharacterized 24.7 kDa protein (219 aa).

The sequence is that of RNA-3 uncharacterized 24.7 kDa protein from Beta macrocarpa (Beet).